We begin with the raw amino-acid sequence, 282 residues long: HTH-type transcriptional activator RhaR (282 aa).

The HTH araC/xylS-type domain occupies 179–277 (DKLITALANS…GMTPSQWRHL (99 aa)). 2 consecutive DNA-binding regions (H-T-H motif) follow at residues 196–217 (DAFCQQEQCSERVLRQQFRAQT) and 244–267 (ISEISMQCGFEDSNYFSVVFTRET).

Binds DNA as a dimer.

The protein resides in the cytoplasm. In terms of biological role, activates expression of the rhaSR operon in response to L-rhamnose. This chain is HTH-type transcriptional activator RhaR, found in Salmonella typhimurium (strain LT2 / SGSC1412 / ATCC 700720).